Reading from the N-terminus, the 141-residue chain is Large ribosomal subunit protein uL16 (141 aa).

This sequence belongs to the universal ribosomal protein uL16 family. Part of the 50S ribosomal subunit.

Its function is as follows. Binds 23S rRNA and is also seen to make contacts with the A and possibly P site tRNAs. This Nostoc punctiforme (strain ATCC 29133 / PCC 73102) protein is Large ribosomal subunit protein uL16.